A 542-amino-acid polypeptide reads, in one-letter code: Carbamoyl phosphate synthase large chain, C-terminal section (542 aa).

Residues Met1 to Glu389 form a carbamoyl phosphate synthetic domain region. The region spanning Ser122–Leu316 is the ATP-grasp domain. ATP contacts are provided by Arg158, Arg197, Ile199, Glu204, Gly230, Val231, His232, Ser233, Gln273, and Glu287. Mg(2+) contacts are provided by Gln273, Glu287, and Asn289. The Mn(2+) site is built by Gln273, Glu287, and Asn289. The MGS-like domain occupies His388–Gly542. An allosteric domain region spans residues Leu390–Gly542.

This sequence belongs to the CarB family. As to quaternary structure, composed of two chains; the small (or glutamine) chain promotes the hydrolysis of glutamine to ammonia, which is used by the large (or ammonia) chain to synthesize carbamoyl phosphate. Tetramer of heterodimers (alpha,beta)4. The cofactor is Mg(2+). Requires Mn(2+) as cofactor.

It catalyses the reaction hydrogencarbonate + L-glutamine + 2 ATP + H2O = carbamoyl phosphate + L-glutamate + 2 ADP + phosphate + 2 H(+). It carries out the reaction hydrogencarbonate + NH4(+) + 2 ATP = carbamoyl phosphate + 2 ADP + phosphate + 2 H(+). Its pathway is amino-acid biosynthesis; L-arginine biosynthesis; carbamoyl phosphate from bicarbonate: step 1/1. It participates in pyrimidine metabolism; UMP biosynthesis via de novo pathway; (S)-dihydroorotate from bicarbonate: step 1/3. Large subunit of the glutamine-dependent carbamoyl phosphate synthetase (CPSase). CPSase catalyzes the formation of carbamoyl phosphate from the ammonia moiety of glutamine, carbonate, and phosphate donated by ATP, constituting the first step of 2 biosynthetic pathways, one leading to arginine and/or urea and the other to pyrimidine nucleotides. The large subunit (synthetase) binds the substrates ammonia (free or transferred from glutamine from the small subunit), hydrogencarbonate and ATP and carries out an ATP-coupled ligase reaction, activating hydrogencarbonate by forming carboxy phosphate which reacts with ammonia to form carbamoyl phosphate. This Methanopyrus kandleri (strain AV19 / DSM 6324 / JCM 9639 / NBRC 100938) protein is Carbamoyl phosphate synthase large chain, C-terminal section (carB2).